The following is a 321-amino-acid chain: MTDAGSWCLIESDPGVFTEMLRGFGVDGLQVEELYSLDDDKAMTRPTYGLIFLFKWRQGDETTGIPSDKQNIFFAHQTIQNACATQALINLLMNVEDTDVKLGNILNQYKEFAIDLDPNTRGHCLSNSEEIRTVHNSFSRQTLFELDIKGGESEDNYHFVTYVPIGNKVYELDGLRELPLEVAEFQKEQDWIEAIKPVIQQRMQKYSEGEITFNLMALVPNRKQKLQEMMENLIQANENNELEEQIADLNKAIADEDYKMEMYRKENNRRRHNYTPFVIELMKILAKEGKLVGLVDNAYQAAKEKSKLNTDITKLELKRKQ.

Residues serine 6 to proline 220 enclose the UCH catalytic domain. Cysteine 83 serves as the catalytic Nucleophile. Histidine 158 functions as the Proton donor in the catalytic mechanism. In terms of domain architecture, ULD spans asparagine 273–alanine 301.

The protein belongs to the peptidase C12 family. As to quaternary structure, interacts with proteasome 19S subunit rpn-13. Highly expressed in intestine and to a lesser extent in other tissues including muscles and neurons.

It carries out the reaction Thiol-dependent hydrolysis of ester, thioester, amide, peptide and isopeptide bonds formed by the C-terminal Gly of ubiquitin (a 76-residue protein attached to proteins as an intracellular targeting signal).. In terms of biological role, ubiquitin-protein hydrolase involved both in the processing of ubiquitin precursors and of ubiquitinated proteins. This enzyme is a thiol protease that recognizes and hydrolyzes a peptide bond at the C-terminal glycine of ubiquitin. This Caenorhabditis elegans protein is Ubiquitin carboxyl-terminal hydrolase ubh-4.